The chain runs to 129 residues: Small ribosomal subunit protein uS11c (129 aa).

This sequence belongs to the universal ribosomal protein uS11 family. As to quaternary structure, part of the 30S ribosomal subunit.

The protein localises to the plastid. The protein resides in the chloroplast. The sequence is that of Small ribosomal subunit protein uS11c from Rhodomonas salina (Cryptomonas salina).